A 256-amino-acid chain; its full sequence is Geranylgeranylglyceryl phosphate synthase (256 aa).

Positions 28 and 53 each coordinate Mg(2+). Sn-glycerol 1-phosphate contacts are provided by residues 172–178 (YLEAGSG), 203–204 (GG), and 225–226 (GT).

It belongs to the GGGP/HepGP synthase family. Group II subfamily. Mg(2+) is required as a cofactor.

The protein localises to the cytoplasm. The enzyme catalyses sn-glycerol 1-phosphate + (2E,6E,10E)-geranylgeranyl diphosphate = sn-3-O-(geranylgeranyl)glycerol 1-phosphate + diphosphate. It participates in membrane lipid metabolism; glycerophospholipid metabolism. Functionally, prenyltransferase that catalyzes the transfer of the geranylgeranyl moiety of geranylgeranyl diphosphate (GGPP) to the C3 hydroxyl of sn-glycerol-1-phosphate (G1P). This reaction is the first ether-bond-formation step in the biosynthesis of archaeal membrane lipids. This is Geranylgeranylglyceryl phosphate synthase from Methanococcus maripaludis (strain C5 / ATCC BAA-1333).